A 290-amino-acid chain; its full sequence is Protease HtpX (290 aa).

Transmembrane regions (helical) follow at residues 4 to 24 (IMLF…TLKL) and 36 to 56 (GSLL…SLFI). His142 provides a ligand contact to Zn(2+). The active site involves Glu143. His146 lines the Zn(2+) pocket. 2 helical membrane-spanning segments follow: residues 150 to 170 (GDMV…MFFA) and 193 to 213 (FIAT…IVMW). Glu219 contributes to the Zn(2+) binding site.

The protein belongs to the peptidase M48B family. It depends on Zn(2+) as a cofactor.

It is found in the cell inner membrane. This is Protease HtpX from Ectopseudomonas mendocina (strain ymp) (Pseudomonas mendocina).